Here is a 197-residue protein sequence, read N- to C-terminus: uncharacterized protein (197 aa).

The N-terminal stretch at 1 to 30 (MSTYIIINIALLIAIVALIFFLSKKTKSEA) is a signal peptide.

This is an uncharacterized protein from Acanthamoeba polyphaga (Amoeba).